A 342-amino-acid polypeptide reads, in one-letter code: S-adenosylmethionine:tRNA ribosyltransferase-isomerase (342 aa).

The protein belongs to the QueA family. As to quaternary structure, monomer.

The protein localises to the cytoplasm. The enzyme catalyses 7-aminomethyl-7-carbaguanosine(34) in tRNA + S-adenosyl-L-methionine = epoxyqueuosine(34) in tRNA + adenine + L-methionine + 2 H(+). Its pathway is tRNA modification; tRNA-queuosine biosynthesis. In terms of biological role, transfers and isomerizes the ribose moiety from AdoMet to the 7-aminomethyl group of 7-deazaguanine (preQ1-tRNA) to give epoxyqueuosine (oQ-tRNA). This Campylobacter jejuni subsp. jejuni serotype O:6 (strain 81116 / NCTC 11828) protein is S-adenosylmethionine:tRNA ribosyltransferase-isomerase.